The primary structure comprises 132 residues: Holo-[acyl-carrier-protein] synthase (132 aa).

Mg(2+) contacts are provided by Asp-8 and Glu-62.

The protein belongs to the P-Pant transferase superfamily. AcpS family. Mg(2+) serves as cofactor.

The protein resides in the cytoplasm. The enzyme catalyses apo-[ACP] + CoA = holo-[ACP] + adenosine 3',5'-bisphosphate + H(+). Functionally, transfers the 4'-phosphopantetheine moiety from coenzyme A to a Ser of acyl-carrier-protein. The sequence is that of Holo-[acyl-carrier-protein] synthase from Polaromonas sp. (strain JS666 / ATCC BAA-500).